Consider the following 1001-residue polypeptide: O-GlcNAcase NagJ (1001 aa).

Positions 1–30 (MKRKMLKRLLTSAFACMFIANGLITTTVRA) are cleaved as a signal peptide. Positions 179–469 (VSARGIVEGF…WNRAIDMLYG (291 aa)) are catalytic domain. The 273-residue stretch at 180–452 (SARGIVEGFY…TAADYSWNMD (273 aa)) folds into the GH84 domain. Positions 187, 218, and 297 each coordinate a protein. Aspartate 298 acts as the Proton donor in catalysis. A protein contacts are provided by residues tyrosine 335, 394–396 (WWN), aspartate 401, and asparagine 429. Coiled-coil stretches lie at residues 515–543 (KEDA…KANL) and 573–597 (VAQL…LNTA). A Fibronectin type-III domain is found at 916–1001 (PVRDFKASEI…KESLTLRTAR (86 aa)).

It belongs to the glycosyl hydrolase 84 family.

The enzyme catalyses 3-O-(N-acetyl-beta-D-glucosaminyl)-L-seryl-[protein] + H2O = N-acetyl-D-glucosamine + L-seryl-[protein]. The catalysed reaction is 3-O-(N-acetyl-beta-D-glucosaminyl)-L-threonyl-[protein] + H2O = L-threonyl-[protein] + N-acetyl-D-glucosamine. Its activity is regulated as follows. Inhibited by O-(2-acetamido-2-deoxy-D-glucopyranosylidene)amino-N-phenyl-carbamate (PUGNAc) and streptozotocin. Its function is as follows. Binds carbohydrates. Capable of hydrolyzing the glycosidic link of O-GlcNAcylated proteins. Can bind and deglycosylate O-glycosylated peptides from mammals. In Clostridium perfringens (strain ATCC 13124 / DSM 756 / JCM 1290 / NCIMB 6125 / NCTC 8237 / Type A), this protein is O-GlcNAcase NagJ (nagJ).